We begin with the raw amino-acid sequence, 349 residues long: MELLSEYGLFLAKIVTVVLAIAAIAAIIVNVAQRNKRQRGELRVNNLSEQYKEMKEELAAALMDSHQQKQWHKAQKKKHKQEAKAAKAKAKLGEVATDSKPRVWVLDFKGSMDAHEVNSLREEITAVLAAFKPQDQVVLRLESPGGMVHGYGLAASQLQRLRDKNIPLTVTVDKVAASGGYMMACVADKIVSAPFAIVGSIGVVAQMPNFNRFLKSKDIDIELHTAGQYKRTLTLLGENTEEGREKFREELNETHQLFKDFVKRMRPSLDIEQVATGEHWYGQQAVEKGLVDEINTSDEVILSLMEGREVVNVRYMQRKRLIDRFTGSAAESADRLLLRWWQRGQKPLM.

Residues 1–8 (MELLSEYG) are Periplasmic-facing. The chain crosses the membrane as a helical span at residues 9–29 (LFLAKIVTVVLAIAAIAAIIV). Residues 30 to 349 (NVAQRNKRQR…WWQRGQKPLM (320 aa)) are Cytoplasmic-facing. Catalysis depends on S178, which acts as the Nucleophile. Catalysis depends on K230, which acts as the Proton donor/acceptor.

It belongs to the peptidase S49 family.

The protein resides in the cell inner membrane. Its function is as follows. Multicopy suppressor of the HtrA (DegP) null phenotype. It is possibly a protease, not essential for bacterial viability. The sequence is that of Probable protease SohB (sohB) from Escherichia coli (strain K12).